The sequence spans 302 residues: DNA-binding transcriptional activator HetR (302 aa).

The active site involves Ser153.

It belongs to the peptidase S48 family. Homodimer; disulfide-linked.

Might be involved in temporal and/or spatial regulation of nitrogen fixation. Dimerization is required for DNA-binding. Has both a protease and a DNA-binding activity. The protein is DNA-binding transcriptional activator HetR of Trichodesmium erythraeum (strain IMS101).